Consider the following 145-residue polypeptide: 3-dehydroquinate dehydratase (145 aa).

Tyr23 functions as the Proton acceptor in the catalytic mechanism. Substrate is bound by residues Asn74, His80, and Asp87. The active-site Proton donor is His100. Substrate is bound by residues 101 to 102 (LS) and Arg111.

The protein belongs to the type-II 3-dehydroquinase family. Homododecamer.

It catalyses the reaction 3-dehydroquinate = 3-dehydroshikimate + H2O. It participates in metabolic intermediate biosynthesis; chorismate biosynthesis; chorismate from D-erythrose 4-phosphate and phosphoenolpyruvate: step 3/7. Catalyzes a trans-dehydration via an enolate intermediate. This chain is 3-dehydroquinate dehydratase, found in Bacillus licheniformis (strain ATCC 14580 / DSM 13 / JCM 2505 / CCUG 7422 / NBRC 12200 / NCIMB 9375 / NCTC 10341 / NRRL NRS-1264 / Gibson 46).